A 160-amino-acid chain; its full sequence is Large ribosomal subunit protein uL11 (160 aa).

This sequence belongs to the universal ribosomal protein uL11 family. Part of the ribosomal stalk of the 50S ribosomal subunit. Interacts with L10 and the large rRNA to form the base of the stalk. L10 forms an elongated spine to which L12 dimers bind in a sequential fashion forming a multimeric L10(L12)X complex.

Functionally, forms part of the ribosomal stalk which helps the ribosome interact with GTP-bound translation factors. This Nanoarchaeum equitans (strain Kin4-M) protein is Large ribosomal subunit protein uL11.